The following is a 44-amino-acid chain: Alpha-amylase inhibitor magnificamide (44 aa).

3 disulfide bridges follow: C6-C38, C16-C33, and C20-C39. The interval 7–10 is inhibitory motif; the sequence is YIYH.

Belongs to the sea anemone alpha-amylase inhibitor family.

The protein resides in the secreted. Its function is as follows. Mammalian alpha-amylase (AMY2A) inhibitor. The recombinant peptide inhibits porcine pancreatic (Ki=0.17 nM) and human saliva alpha-amylases (Ki=7.7 nM). It does not show antimicrobial (tested on fungi and bacteria) or channel modulating activities (tested on 18 voltage-gated sodium and potassium channles). In Heteractis magnifica (Magnificent sea anemone), this protein is Alpha-amylase inhibitor magnificamide.